The following is a 152-amino-acid chain: Aspartate 1-decarboxylase (152 aa).

Serine 24 serves as the catalytic Schiff-base intermediate with substrate; via pyruvic acid. Serine 24 is subject to Pyruvic acid (Ser). Threonine 56 is a substrate binding site. Tyrosine 57 serves as the catalytic Proton donor. 72 to 74 is a binding site for substrate; sequence GAA.

The protein belongs to the PanD family. Heterooctamer of four alpha and four beta subunits. Pyruvate serves as cofactor. Post-translationally, is synthesized initially as an inactive proenzyme, which is activated by self-cleavage at a specific serine bond to produce a beta-subunit with a hydroxyl group at its C-terminus and an alpha-subunit with a pyruvoyl group at its N-terminus.

Its subcellular location is the cytoplasm. The enzyme catalyses L-aspartate + H(+) = beta-alanine + CO2. Its pathway is cofactor biosynthesis; (R)-pantothenate biosynthesis; beta-alanine from L-aspartate: step 1/1. In terms of biological role, catalyzes the pyruvoyl-dependent decarboxylation of aspartate to produce beta-alanine. In Rhodospirillum centenum (strain ATCC 51521 / SW), this protein is Aspartate 1-decarboxylase.